The primary structure comprises 265 residues: Polyphosphate glucokinase (265 aa).

Over residues methionine 1–arginine 18 the composition is skewed to polar residues. The disordered stretch occupies residues methionine 1–glycine 22. Residue aspartate 24–glycine 29 participates in ATP binding.

The protein belongs to the ROK (NagC/XylR) family. As to quaternary structure, homodimer.

The enzyme catalyses [phosphate](n) + D-glucose = [phosphate](n-1) + D-glucose 6-phosphate + H(+). The catalysed reaction is D-glucose + ATP = D-glucose 6-phosphate + ADP + H(+). Functionally, catalyzes the phosphorylation of glucose using polyphosphate or ATP as the phosphoryl donor. Polyphosphate, rather than ATP, seems to be the major phosphate donor for the enzyme in M.tuberculosis. GTP, UTP and CTP can replace ATP as phosphoryl donor. This is Polyphosphate glucokinase (ppgK) from Mycobacterium tuberculosis (strain ATCC 25177 / H37Ra).